A 22-amino-acid chain; its full sequence is Magnificalysin II (22 aa).

Residues 3–12 (ALAGTIIDGA) form a plays an important role in the hemolytic activity region. Residues 11–22 (GASLGFDILNKV) are N-terminal region.

This sequence belongs to the actinoporin family. Sea anemone subfamily. In terms of assembly, octamer or nonamer in membranes. Monomer in the soluble state.

The protein localises to the secreted. The protein resides in the nematocyst. It is found in the target cell membrane. Functionally, pore-forming protein that forms cations-selective hydrophilic pores of around 1 nm and causes cytolysis. Pore formation is a multi-step process that involves specific recognition of membrane sphingomyelin (but neither cholesterol nor phosphatidylcholine) using aromatic rich region and adjacent phosphocholine (POC) binding site, firm binding to the membrane (mainly driven by hydrophobic interactions) accompanied by the transfer of the N-terminal region to the lipid-water interface and finally pore formation after oligomerization of monomers. This Heteractis magnifica (Magnificent sea anemone) protein is Magnificalysin II.